The chain runs to 151 residues: Ribosome maturation factor RimP (151 aa).

This sequence belongs to the RimP family.

It localises to the cytoplasm. Required for maturation of 30S ribosomal subunits. This Shewanella denitrificans (strain OS217 / ATCC BAA-1090 / DSM 15013) protein is Ribosome maturation factor RimP.